The following is a 360-amino-acid chain: Peptide chain release factor 1 (360 aa).

N5-methylglutamine is present on glutamine 235. Positions 285–304 are disordered; it reads KRQQEEASTRRNLLGSGDRS.

The protein belongs to the prokaryotic/mitochondrial release factor family. Post-translationally, methylated by PrmC. Methylation increases the termination efficiency of RF1.

The protein resides in the cytoplasm. Its function is as follows. Peptide chain release factor 1 directs the termination of translation in response to the peptide chain termination codons UAG and UAA. The sequence is that of Peptide chain release factor 1 from Edwardsiella ictaluri (strain 93-146).